A 91-amino-acid chain; its full sequence is UPF0250 protein BB0170 (91 aa).

Belongs to the UPF0250 family.

The polypeptide is UPF0250 protein BB0170 (Bordetella bronchiseptica (strain ATCC BAA-588 / NCTC 13252 / RB50) (Alcaligenes bronchisepticus)).